Reading from the N-terminus, the 374-residue chain is S-adenosylmethionine:tRNA ribosyltransferase-isomerase (374 aa).

It belongs to the QueA family. In terms of assembly, monomer.

The protein resides in the cytoplasm. The catalysed reaction is 7-aminomethyl-7-carbaguanosine(34) in tRNA + S-adenosyl-L-methionine = epoxyqueuosine(34) in tRNA + adenine + L-methionine + 2 H(+). It participates in tRNA modification; tRNA-queuosine biosynthesis. Its function is as follows. Transfers and isomerizes the ribose moiety from AdoMet to the 7-aminomethyl group of 7-deazaguanine (preQ1-tRNA) to give epoxyqueuosine (oQ-tRNA). This Prochlorococcus marinus (strain MIT 9301) protein is S-adenosylmethionine:tRNA ribosyltransferase-isomerase.